Here is a 315-residue protein sequence, read N- to C-terminus: Methionyl-tRNA formyltransferase (315 aa).

Position 114-117 (114-117 (SLLP)) interacts with (6S)-5,6,7,8-tetrahydrofolate.

The protein belongs to the Fmt family.

The catalysed reaction is L-methionyl-tRNA(fMet) + (6R)-10-formyltetrahydrofolate = N-formyl-L-methionyl-tRNA(fMet) + (6S)-5,6,7,8-tetrahydrofolate + H(+). Attaches a formyl group to the free amino group of methionyl-tRNA(fMet). The formyl group appears to play a dual role in the initiator identity of N-formylmethionyl-tRNA by promoting its recognition by IF2 and preventing the misappropriation of this tRNA by the elongation apparatus. This Corynebacterium efficiens (strain DSM 44549 / YS-314 / AJ 12310 / JCM 11189 / NBRC 100395) protein is Methionyl-tRNA formyltransferase.